A 151-amino-acid chain; its full sequence is Large ribosomal subunit protein uL13 (151 aa).

The tract at residues 129–151 (SNHPHQAQKPETLTINTIPGGNN) is disordered.

It belongs to the universal ribosomal protein uL13 family. As to quaternary structure, part of the 50S ribosomal subunit.

This protein is one of the early assembly proteins of the 50S ribosomal subunit, although it is not seen to bind rRNA by itself. It is important during the early stages of 50S assembly. This Gloeothece citriformis (strain PCC 7424) (Cyanothece sp. (strain PCC 7424)) protein is Large ribosomal subunit protein uL13.